A 329-amino-acid polypeptide reads, in one-letter code: Cysteine synthase (329 aa).

Position 48 is an N6-(pyridoxal phosphate)lysine (Lys48). Pyridoxal 5'-phosphate is bound by residues Asn78, 183-187, and Ser278; that span reads GTGGT.

Belongs to the cysteine synthase/cystathionine beta-synthase family. As to quaternary structure, homodimer. Pyridoxal 5'-phosphate serves as cofactor.

It catalyses the reaction O-acetyl-L-serine + hydrogen sulfide = L-cysteine + acetate. It participates in amino-acid biosynthesis; L-cysteine biosynthesis; L-cysteine from L-serine: step 2/2. Its function is as follows. Catalyzes the conversion of O-acetylserine (OAS) to cysteine through the elimination of acetate and addition of hydrogen sulfide. The polypeptide is Cysteine synthase (srpG) (Synechococcus elongatus (strain ATCC 33912 / PCC 7942 / FACHB-805) (Anacystis nidulans R2)).